A 56-amino-acid polypeptide reads, in one-letter code: Large ribosomal subunit protein bL33 (56 aa).

The protein belongs to the bacterial ribosomal protein bL33 family.

The polypeptide is Large ribosomal subunit protein bL33 (Aliarcobacter butzleri (strain RM4018) (Arcobacter butzleri)).